A 503-amino-acid polypeptide reads, in one-letter code: Probable cytosol aminopeptidase (503 aa).

Residues Lys-274 and Asp-279 each coordinate Mn(2+). Residue Lys-286 is part of the active site. Mn(2+) is bound by residues Asp-297, Asp-356, and Glu-358. Arg-360 is an active-site residue.

Belongs to the peptidase M17 family. It depends on Mn(2+) as a cofactor.

It is found in the cytoplasm. It carries out the reaction Release of an N-terminal amino acid, Xaa-|-Yaa-, in which Xaa is preferably Leu, but may be other amino acids including Pro although not Arg or Lys, and Yaa may be Pro. Amino acid amides and methyl esters are also readily hydrolyzed, but rates on arylamides are exceedingly low.. The enzyme catalyses Release of an N-terminal amino acid, preferentially leucine, but not glutamic or aspartic acids.. Presumably involved in the processing and regular turnover of intracellular proteins. Catalyzes the removal of unsubstituted N-terminal amino acids from various peptides. The sequence is that of Probable cytosol aminopeptidase from Burkholderia thailandensis (strain ATCC 700388 / DSM 13276 / CCUG 48851 / CIP 106301 / E264).